Consider the following 653-residue polypeptide: Aspartate--tRNA ligase, mitochondrial (653 aa).

Residues 1 to 46 (MYLGFWLSRLCRGLSRPIGKTMRPIWGSLSRNLALSSQRIPEFSSF) constitute a mitochondrion transit peptide. Threonine 218 is modified (phosphothreonine). Serine 241 is subject to Phosphoserine. The segment at 243–246 (QQFK) is aspartate. Arginine 265 serves as a coordination point for L-aspartate. ATP is bound by residues 265-267 (RDE) and glutamate 534. Arginine 541 contacts L-aspartate. 583-586 (GLDR) provides a ligand contact to ATP.

This sequence belongs to the class-II aminoacyl-tRNA synthetase family. Type 1 subfamily. In terms of assembly, homodimer.

It is found in the mitochondrion matrix. The protein resides in the mitochondrion membrane. It carries out the reaction tRNA(Asp) + L-aspartate + ATP = L-aspartyl-tRNA(Asp) + AMP + diphosphate. Functionally, catalyzes the attachment of aspartate to tRNA(Asp) in a two-step reaction: aspartate is first activated by ATP to form Asp-AMP and then transferred to the acceptor end of tRNA(Asp). This chain is Aspartate--tRNA ligase, mitochondrial (Dars2), found in Mus musculus (Mouse).